A 234-amino-acid polypeptide reads, in one-letter code: Sugar fermentation stimulation protein A (234 aa).

The segment at residues 201–220 (LLTEAQQRGVEILAYKAEIS) is a DNA-binding region (H-T-H motif).

Belongs to the SfsA family.

In terms of biological role, binds to DNA non-specifically. Could be a regulatory factor involved in maltose metabolism. The polypeptide is Sugar fermentation stimulation protein A (Escherichia fergusonii (strain ATCC 35469 / DSM 13698 / CCUG 18766 / IAM 14443 / JCM 21226 / LMG 7866 / NBRC 102419 / NCTC 12128 / CDC 0568-73)).